The chain runs to 168 residues: 2-C-methyl-D-erythritol 2,4-cyclodiphosphate synthase (168 aa).

The a divalent metal cation site is built by Asp-11 and His-13. 4-CDP-2-C-methyl-D-erythritol 2-phosphate contacts are provided by residues 11–13 (DVH) and 38–39 (HS). His-46 contributes to the a divalent metal cation binding site. 4-CDP-2-C-methyl-D-erythritol 2-phosphate-binding positions include 60-62 (DIG), 133-136 (TTTD), Phe-140, and Arg-143.

The protein belongs to the IspF family. In terms of assembly, homotrimer. Requires a divalent metal cation as cofactor.

It carries out the reaction 4-CDP-2-C-methyl-D-erythritol 2-phosphate = 2-C-methyl-D-erythritol 2,4-cyclic diphosphate + CMP. It participates in isoprenoid biosynthesis; isopentenyl diphosphate biosynthesis via DXP pathway; isopentenyl diphosphate from 1-deoxy-D-xylulose 5-phosphate: step 4/6. Involved in the biosynthesis of isopentenyl diphosphate (IPP) and dimethylallyl diphosphate (DMAPP), two major building blocks of isoprenoid compounds. Catalyzes the conversion of 4-diphosphocytidyl-2-C-methyl-D-erythritol 2-phosphate (CDP-ME2P) to 2-C-methyl-D-erythritol 2,4-cyclodiphosphate (ME-CPP) with a corresponding release of cytidine 5-monophosphate (CMP). The sequence is that of 2-C-methyl-D-erythritol 2,4-cyclodiphosphate synthase from Cutibacterium acnes (strain DSM 16379 / KPA171202) (Propionibacterium acnes).